The following is a 130-amino-acid chain: Guanyl-specific ribonuclease T1 (130 aa).

A signal peptide spans 1 to 26 (MMYSKLLTLTTLLLPTALALPSLVER). Disulfide bonds link Cys28–Cys36 and Cys32–Cys129. His66 is a catalytic residue. Glu84 (proton acceptor) is an active-site residue. His118 (proton donor) is an active-site residue.

The protein belongs to the ribonuclease N1/T1 family. As to quaternary structure, monomer.

The catalysed reaction is [RNA] containing guanosine + H2O = an [RNA fragment]-3'-guanosine-3'-phosphate + a 5'-hydroxy-ribonucleotide-3'-[RNA fragment].. The protein is Guanyl-specific ribonuclease T1 (rntA) of Aspergillus oryzae (strain ATCC 42149 / RIB 40) (Yellow koji mold).